Consider the following 208-residue polypeptide: Small ribosomal subunit protein uS4A (208 aa).

One can recognise an S4 RNA-binding domain in the interval 98–159; the sequence is SRLDNVAYNM…HAKSYLRIKA (62 aa).

The protein belongs to the universal ribosomal protein uS4 family. Part of the 30S ribosomal subunit. Contacts protein S5. The interaction surface between S4 and S5 is involved in control of translational fidelity.

Functionally, one of the primary rRNA binding proteins, it binds directly to 16S rRNA where it nucleates assembly of the body of the 30S subunit. With S5 and S12 plays an important role in translational accuracy. The sequence is that of Small ribosomal subunit protein uS4A (rpsD1) from Nitrosomonas europaea (strain ATCC 19718 / CIP 103999 / KCTC 2705 / NBRC 14298).